A 130-amino-acid polypeptide reads, in one-letter code: Small ribosomal subunit protein uS8 (130 aa).

Belongs to the universal ribosomal protein uS8 family. Part of the 30S ribosomal subunit. Contacts proteins S5 and S12.

In terms of biological role, one of the primary rRNA binding proteins, it binds directly to 16S rRNA central domain where it helps coordinate assembly of the platform of the 30S subunit. The chain is Small ribosomal subunit protein uS8 from Histophilus somni (strain 129Pt) (Haemophilus somnus).